Reading from the N-terminus, the 419-residue chain is CCA-adding enzyme (419 aa).

ATP contacts are provided by Ser54 and Arg57. 2 residues coordinate CTP: Ser54 and Arg57. Mg(2+) contacts are provided by Asp66, Asp68, and Asp118. 3 residues coordinate ATP: His141, Lys161, and Tyr170. His141, Lys161, and Tyr170 together coordinate CTP.

It belongs to the tRNA nucleotidyltransferase/poly(A) polymerase family. Archaeal CCA-adding enzyme subfamily. Homodimer. It depends on Mg(2+) as a cofactor.

The enzyme catalyses a tRNA precursor + 2 CTP + ATP = a tRNA with a 3' CCA end + 3 diphosphate. It catalyses the reaction a tRNA with a 3' CCA end + 2 CTP + ATP = a tRNA with a 3' CCACCA end + 3 diphosphate. Functionally, catalyzes the addition and repair of the essential 3'-terminal CCA sequence in tRNAs without using a nucleic acid template. Adds these three nucleotides in the order of C, C, and A to the tRNA nucleotide-73, using CTP and ATP as substrates and producing inorganic pyrophosphate. tRNA 3'-terminal CCA addition is required both for tRNA processing and repair. Also involved in tRNA surveillance by mediating tandem CCA addition to generate a CCACCA at the 3' terminus of unstable tRNAs. While stable tRNAs receive only 3'-terminal CCA, unstable tRNAs are marked with CCACCA and rapidly degraded. This chain is CCA-adding enzyme, found in Pyrobaculum aerophilum (strain ATCC 51768 / DSM 7523 / JCM 9630 / CIP 104966 / NBRC 100827 / IM2).